The sequence spans 296 residues: tRNA dimethylallyltransferase (296 aa).

An ATP-binding site is contributed by 2–9 (GPTASGKT). Substrate is bound at residue 4–9 (TASGKT). Interaction with substrate tRNA regions lie at residues 27–30 (DSAL), 151–155 (QRLSR), and 232–237 (RCVGYR).

Belongs to the IPP transferase family. As to quaternary structure, monomer. Mg(2+) is required as a cofactor.

It catalyses the reaction adenosine(37) in tRNA + dimethylallyl diphosphate = N(6)-dimethylallyladenosine(37) in tRNA + diphosphate. In terms of biological role, catalyzes the transfer of a dimethylallyl group onto the adenine at position 37 in tRNAs that read codons beginning with uridine, leading to the formation of N6-(dimethylallyl)adenosine (i(6)A). The protein is tRNA dimethylallyltransferase of Shewanella sp. (strain MR-7).